The chain runs to 350 residues: Autophagy-related protein 3 (350 aa).

The segment at 85-166 (NFAGDAGLEE…EEDDEAIIRD (82 aa)) is flexible region. A disordered region spans residues 97 to 171 (VDDGDEFKGS…AIIRDTDASG (75 aa)). Positions 102–113 (EFKGSKGDDDGW) are enriched in basic and acidic residues. Over residues 146 to 161 (DDDDDIPDMEDEEDDE) the composition is skewed to acidic residues. The active-site Glycyl thioester intermediate is the C244. The tract at residues 248–326 (PVMKTLLDRA…DQEVAIRVDQ (79 aa)) is handle region. K262 and K267 each carry N6-acetyllysine.

It belongs to the ATG3 family. Monomer. Interacts with ATG8 through an intermediate thioester bond through the C-terminal Gly of ATG8. Also interacts with the 40 amino acid C-terminal region of the E1-like ATG7 enzyme. Also interacts with the ATG12-ATG5 conjugate. Interacts with HAT1. In terms of processing, acetylated by HAT1 at Lys-262 and Lys-267, which affects the interaction with ATG8 and prevents autophagy during both appressorium development and nutrient starvation.

It localises to the preautophagosomal structure. It is found in the cytoplasm. E2 conjugating enzyme required for the cytoplasm to vacuole transport (Cvt) and autophagy. Required for selective autophagic degradation of the nucleus (nucleophagy) as well as for mitophagy which contributes to regulate mitochondrial quantity and quality by eliminating the mitochondria to a basal level to fulfill cellular energy requirements and preventing excess ROS production. Responsible for the E2-like covalent binding of phosphatidylethanolamine to the C-terminal Gly of ATG8. The ATG12-ATG5 conjugate plays a role of an E3 and promotes the transfer of ATG8 from ATG3 to phosphatidylethanolamine (PE). This step is required for the membrane association of ATG8. The formation of the ATG8-phosphatidylethanolamine conjugate is essential for autophagy and for the cytoplasm to vacuole transport (Cvt). The ATG8-PE conjugate mediates tethering between adjacent membranes and stimulates membrane hemifusion, leading to expansion of the autophagosomal membrane during autophagy. Plays a role in appressorium formation and pathogenicity. The protein is Autophagy-related protein 3 of Pyricularia oryzae (strain 70-15 / ATCC MYA-4617 / FGSC 8958) (Rice blast fungus).